The primary structure comprises 112 residues: Protein ORF3 (112 aa).

Hydrophobic regions lie at residues 7-23 (ALGL…LCCP) and 40-60 (AAVV…PIFI). The segment at 28-66 (VSRLAVAAGKRGAAVVSGVTGLILSPSPSPIFIQPTPSH) is interaction with host HPX. The homodimerization, and interaction with host AMBP/bikunin stretch occupies residues 70–112 (QPPPGLELALGSQSVHSAPLGVTSPSAPPLPPVVDLPQLGLRR). The disordered stretch occupies residues 89 to 112 (LGVTSPSAPPLPPVVDLPQLGLRR). An interaction with host SRC, HCK, FYN, PIK3R3 and GRB2 region spans residues 93 to 102 (SPSAPPLPPV). A PTAP/PSAP motif motif is present at residues 94-97 (PSAP).

Belongs to the hepevirus ORF3 protein family. Forms homooligomers. Interacts with host SRC, HCK, FYN, PIK3R3 and GRB2 (via SH3 domain); binding does not activate the kinases. Interacts with host AMBP/bikunin and AMBP/alpha-1-microglobulin peptides. Interacts with host HPX/hemopexin. Interacts (when phosphorylated) with capsid protein ORF2. Interacts with host TSG101; this interaction plays a role in viral release from the host cell. Interacts with host SIRPA; this interaction down-regulates the phosphorylation of host IRF3. Palmitoylated in the N-terminus.

It localises to the host endoplasmic reticulum membrane. Its subcellular location is the host cytoplasm. The protein resides in the host cytoskeleton. The protein localises to the virion. It is found in the host cell membrane. Its function is as follows. Small multifunctional phosphoprotein involved in virion morphogenesis, egress and counteracting host innate immunity. Plays critical roles in the final steps of viral release by interacting with host TSG101, a member of the vacuolar protein-sorting pathway and using other cellular host proteins involved in vesicle formation pathway. Also acts as a viroporin and forms ion conductive pores allowing viral particle release. Impairs the generation of type I interferon by down-regulating host TLR3 and TLR7 as well as their downstream signaling pathways. Down-regulates the phosphorylation of host IRF3 via the interaction with host SIRP-alpha, thereby inhibiting IFN-I expression. Interacts with host microtubules. In Bandicota bengalensis (lesser bandicoot rat), this protein is Protein ORF3.